Consider the following 351-residue polypeptide: Probable RNA methyltransferase BAV1540 (351 aa).

Glu-90 acts as the Proton acceptor in catalysis. A Radical SAM core domain is found at 93 to 319 (LLPRDGLCVS…VKVRNSAGQD (227 aa)). Cys-100 and Cys-324 are disulfide-bonded. [4Fe-4S] cluster-binding residues include Cys-107, Cys-111, and Cys-114. S-adenosyl-L-methionine is bound by residues 152–153 (GE), Ser-182, 205–207 (SLH), and Asn-281. The active-site S-methylcysteine intermediate is the Cys-324.

This sequence belongs to the radical SAM superfamily. RlmN family. Requires [4Fe-4S] cluster as cofactor.

Its subcellular location is the cytoplasm. The chain is Probable RNA methyltransferase BAV1540 from Bordetella avium (strain 197N).